The following is a 266-amino-acid chain: UPF0354 protein lmo1608 (266 aa).

Belongs to the UPF0354 family.

The polypeptide is UPF0354 protein lmo1608 (Listeria monocytogenes serovar 1/2a (strain ATCC BAA-679 / EGD-e)).